The primary structure comprises 284 residues: UDP-N-acetylenolpyruvoylglucosamine reductase (284 aa).

One can recognise an FAD-binding PCMH-type domain in the interval lysine 12–glutamate 174. Arginine 153 is a catalytic residue. Catalysis depends on serine 203, which acts as the Proton donor. Glutamate 274 is an active-site residue.

It belongs to the MurB family. FAD serves as cofactor.

It localises to the cytoplasm. It catalyses the reaction UDP-N-acetyl-alpha-D-muramate + NADP(+) = UDP-N-acetyl-3-O-(1-carboxyvinyl)-alpha-D-glucosamine + NADPH + H(+). It functions in the pathway cell wall biogenesis; peptidoglycan biosynthesis. Functionally, cell wall formation. This is UDP-N-acetylenolpyruvoylglucosamine reductase from Thermotoga petrophila (strain ATCC BAA-488 / DSM 13995 / JCM 10881 / RKU-1).